The following is a 190-amino-acid chain: Ladderlectin (190 aa).

An N-terminal signal peptide occupies residues 1–18; that stretch reads MAMLTISLLLCAAVALNG. Residues 60-179 enclose the C-type lectin domain; the sequence is GSRCFMFVET…GNSFPSGVLQ (120 aa). Cys153 and Cys169 are disulfide-bonded.

Multimeric. As to expression, expressed in cells of the branchial epithelium, hepatic sinusoids, biliary epithelium, renal interstitium, skin, and sub-mucosal granular layer of the intestine. Highly expressed in caudal kidney. Moderately expressed in liver. Weakly expressed in gill, spleen, cranial kidney and skin. Isoform 1 is highly expressed in intestine. Isoform 2 is weakly expressed in intestine.

Lectin that binds sepharose in a calcium-dependent manner. This chain is Ladderlectin, found in Oncorhynchus mykiss (Rainbow trout).